The primary structure comprises 207 residues: Octanoyltransferase (207 aa).

In terms of domain architecture, BPL/LPL catalytic spans 27–203; that stretch reads ADTEDELWVV…HLETQFTPKA (177 aa). Substrate is bound by residues 66–73, 133–135, and 146–148; these read RGGQITYH, SLG, and GLA. The Acyl-thioester intermediate role is filled by cysteine 164.

The protein belongs to the LipB family.

Its subcellular location is the cytoplasm. The enzyme catalyses octanoyl-[ACP] + L-lysyl-[protein] = N(6)-octanoyl-L-lysyl-[protein] + holo-[ACP] + H(+). It functions in the pathway protein modification; protein lipoylation via endogenous pathway; protein N(6)-(lipoyl)lysine from octanoyl-[acyl-carrier-protein]: step 1/2. Catalyzes the transfer of endogenously produced octanoic acid from octanoyl-acyl-carrier-protein onto the lipoyl domains of lipoate-dependent enzymes. Lipoyl-ACP can also act as a substrate although octanoyl-ACP is likely to be the physiological substrate. This is Octanoyltransferase from Neisseria meningitidis serogroup B (strain ATCC BAA-335 / MC58).